A 180-amino-acid chain; its full sequence is Acireductone dioxygenase (180 aa).

Residues histidine 97, histidine 99, glutamate 103, and histidine 141 each contribute to the Fe(2+) site. Residues histidine 97, histidine 99, glutamate 103, and histidine 141 each contribute to the Ni(2+) site.

This sequence belongs to the acireductone dioxygenase (ARD) family. Monomer. Fe(2+) serves as cofactor. It depends on Ni(2+) as a cofactor.

It carries out the reaction 1,2-dihydroxy-5-(methylsulfanyl)pent-1-en-3-one + O2 = 3-(methylsulfanyl)propanoate + CO + formate + 2 H(+). The enzyme catalyses 1,2-dihydroxy-5-(methylsulfanyl)pent-1-en-3-one + O2 = 4-methylsulfanyl-2-oxobutanoate + formate + 2 H(+). The protein operates within amino-acid biosynthesis; L-methionine biosynthesis via salvage pathway; L-methionine from S-methyl-5-thio-alpha-D-ribose 1-phosphate: step 5/6. Catalyzes 2 different reactions between oxygen and the acireductone 1,2-dihydroxy-3-keto-5-methylthiopentene (DHK-MTPene) depending upon the metal bound in the active site. Fe-containing acireductone dioxygenase (Fe-ARD) produces formate and 2-keto-4-methylthiobutyrate (KMTB), the alpha-ketoacid precursor of methionine in the methionine recycle pathway. Ni-containing acireductone dioxygenase (Ni-ARD) produces methylthiopropionate, carbon monoxide and formate, and does not lie on the methionine recycle pathway. The polypeptide is Acireductone dioxygenase (Serratia proteamaculans (strain 568)).